Here is a 200-residue protein sequence, read N- to C-terminus: dITP/XTP pyrophosphatase (200 aa).

T19 to K24 contacts substrate. E49 and D78 together coordinate Mg(2+). The active-site Proton acceptor is the D78. Substrate contacts are provided by residues S79, F158–D161, K181, and H186–R187.

The protein belongs to the HAM1 NTPase family. Homodimer. Mg(2+) is required as a cofactor.

The catalysed reaction is XTP + H2O = XMP + diphosphate + H(+). It catalyses the reaction dITP + H2O = dIMP + diphosphate + H(+). The enzyme catalyses ITP + H2O = IMP + diphosphate + H(+). Functionally, pyrophosphatase that catalyzes the hydrolysis of nucleoside triphosphates to their monophosphate derivatives, with a high preference for the non-canonical purine nucleotides XTP (xanthosine triphosphate), dITP (deoxyinosine triphosphate) and ITP. Seems to function as a house-cleaning enzyme that removes non-canonical purine nucleotides from the nucleotide pool, thus preventing their incorporation into DNA/RNA and avoiding chromosomal lesions. In Deinococcus radiodurans (strain ATCC 13939 / DSM 20539 / JCM 16871 / CCUG 27074 / LMG 4051 / NBRC 15346 / NCIMB 9279 / VKM B-1422 / R1), this protein is dITP/XTP pyrophosphatase.